A 397-amino-acid polypeptide reads, in one-letter code: Elongation factor Tu (397 aa).

Positions 10–206 constitute a tr-type G domain; it reads KPHVNIGTIG…AVDTSIPQPE (197 aa). Residues 19–26 form a G1 region; the sequence is GHIDHGKT. 19-26 is a GTP binding site; that stretch reads GHIDHGKT. Threonine 26 contacts Mg(2+). Residues 62–66 form a G2 region; that stretch reads GITIS. The tract at residues 83–86 is G3; it reads DCPG. GTP-binding positions include 83–87 and 138–141; these read DCPGH and NKSD. The interval 138–141 is G4; the sequence is NKSD. The tract at residues 176–178 is G5; sequence SAL.

The protein belongs to the TRAFAC class translation factor GTPase superfamily. Classic translation factor GTPase family. EF-Tu/EF-1A subfamily. In terms of assembly, monomer.

The protein localises to the cytoplasm. The catalysed reaction is GTP + H2O = GDP + phosphate + H(+). Its function is as follows. GTP hydrolase that promotes the GTP-dependent binding of aminoacyl-tRNA to the A-site of ribosomes during protein biosynthesis. The sequence is that of Elongation factor Tu from Salinispora tropica (strain ATCC BAA-916 / DSM 44818 / JCM 13857 / NBRC 105044 / CNB-440).